The following is a 281-amino-acid chain: Ethylene-inducing xylanase 1 (281 aa).

A signal peptide spans 1–19; the sequence is MVSYKAFLITLAAVTRVLT. Asn-23 carries an N-linked (GlcNAc...) asparagine glycan. The 189-residue stretch at 32 to 220 folds into the GH11 domain; it reads SGTPSSTGTS…SSGSSDITVG (189 aa). The Nucleophile role is filled by Glu-116. The Proton donor role is filled by Glu-207. Residues 246–281 enclose the CBM1 domain; sequence TCGALYSQCGGTGFTGSQCCASGTCKYANSYYSQCL.

This sequence belongs to the glycosyl hydrolase 11 (cellulase G) family.

The catalysed reaction is Endohydrolysis of (1-&gt;4)-beta-D-xylosidic linkages in xylans.. It participates in glycan degradation; xylan degradation. Its function is as follows. Endo-1,4-beta-xylanase involved in the hydrolysis of xylan, a major structural heterogeneous polysaccharide found in plant biomass representing the second most abundant polysaccharide in the biosphere, after cellulose. May act as an elicitor of plant defense responses in certain plants but does not exhibit any cell death when transiently expressed in N.benthamiana. This is Ethylene-inducing xylanase 1 from Botryotinia fuckeliana (strain B05.10) (Noble rot fungus).